We begin with the raw amino-acid sequence, 239 residues long: Pentatricopeptide repeat-containing protein DWY1, chloroplastic (239 aa).

The N-terminal 35 residues, 1-35 (MALEAAFSMSFCSFSVPKAIFCERETSSFQRITSR), are a transit peptide targeting the chloroplast. Disordered regions lie at residues 40-59 (AGES…KETS) and 101-122 (HISP…SGGE). Residues 111 to 122 (VRGDKPEISGGE) show a composition bias toward basic and acidic residues. Residues 113–144 (GDKPEISGGEKKAIVDRSKAYVKLKSLGKEVR) are type E(+) motif. Positions 145–239 (DAGYVPETKY…DGNCSCGDYW (95 aa)) are type DYW motif.

The protein belongs to the PPR family. PCMP-H subfamily. As to quaternary structure, interacts with CRR4. Zn(2+) is required as a cofactor.

The protein localises to the plastid. It localises to the chloroplast. Functionally, plays a major role in single RNA editing events in chloroplasts. Acts as a site-recognition transacting factor involved in the edition of the site 1 of ndhD (ndhD-1 site corresponding to cytidine-2), which is a plastid-encoded subunit of the NADH-plastoquinone oxidoreductase. The interaction with CRR4 is required for its function in editing the ndhD-1 site. The sequence is that of Pentatricopeptide repeat-containing protein DWY1, chloroplastic from Arabidopsis thaliana (Mouse-ear cress).